The sequence spans 145 residues: 6-pyruvoyl tetrahydrobiopterin synthase (145 aa).

Ser19 is subject to Phosphoserine. Zn(2+) is bound at residue His24. The residue at position 28 (Ser28) is a Phosphoserine. Cys43 serves as the catalytic Proton acceptor. Zn(2+) contacts are provided by His49 and His51. The Charge relay system role is filled by His90. Tyr128 bears the Phosphotyrosine mark. The active-site Charge relay system is Glu134.

This sequence belongs to the PTPS family. Homohexamer formed of two homotrimers in a head to head fashion. The cofactor is Zn(2+). Post-translationally, phosphorylation of Ser-19 is required for maximal enzyme activity.

It carries out the reaction 7,8-dihydroneopterin 3'-triphosphate = 6-pyruvoyl-5,6,7,8-tetrahydropterin + triphosphate + H(+). The protein operates within cofactor biosynthesis; tetrahydrobiopterin biosynthesis; tetrahydrobiopterin from 7,8-dihydroneopterin triphosphate: step 1/3. Its function is as follows. Involved in the biosynthesis of tetrahydrobiopterin, an essential cofactor of aromatic amino acid hydroxylases. Catalyzes the transformation of 7,8-dihydroneopterin triphosphate into 6-pyruvoyl tetrahydropterin. This chain is 6-pyruvoyl tetrahydrobiopterin synthase (PTS), found in Pongo abelii (Sumatran orangutan).